The primary structure comprises 460 residues: MFS-type transporter PUL3 (460 aa).

A run of 8 helical transmembrane segments spans residues 16 to 36, 50 to 70, 81 to 101, 113 to 133, 151 to 171, 181 to 201, 240 to 260, and 271 to 291; these read AVTL…SSVV, YLFI…FIIG, WVII…SCAG, IICG…TAIS, GICM…DFTV, APTF…MFVL, MFLS…FLTL, and VAFM…PDLV. Residues 300-323 form a disordered region; it reads PSTQDETDTSDNDKIEKEESEQKS. Residues 310 to 323 show a composition bias toward basic and acidic residues; that stretch reads DNDKIEKEESEQKS. 4 helical membrane passes run 333–353, 369–389, 408–428, and 433–453; these read VSLT…MIGA, IFFT…GSSV, FIGA…AALY, and GLPI…PSLV.

The protein belongs to the major facilitator superfamily. TCR/Tet family.

The protein resides in the cell membrane. Functionally, MFS-type transporer required for the uptake of iron via the uptake of the siderophore pulcherrimin-iron complex. The polypeptide is MFS-type transporter PUL3 (Kluyveromyces lactis (strain ATCC 8585 / CBS 2359 / DSM 70799 / NBRC 1267 / NRRL Y-1140 / WM37) (Yeast)).